The sequence spans 198 residues: Recombination protein RecR (198 aa).

The segment at 57–72 (CSVCGHITDQDPCAIC) adopts a C4-type zinc-finger fold. The region spanning 80 to 175 (SLICVVQDPK…RTTRIAHGLP (96 aa)) is the Toprim domain.

Belongs to the RecR family.

Functionally, may play a role in DNA repair. It seems to be involved in an RecBC-independent recombinational process of DNA repair. It may act with RecF and RecO. This chain is Recombination protein RecR, found in Oceanobacillus iheyensis (strain DSM 14371 / CIP 107618 / JCM 11309 / KCTC 3954 / HTE831).